The following is a 571-amino-acid chain: Probable serine/threonine-protein kinase WNK4 (571 aa).

In terms of domain architecture, Protein kinase spans 19 to 277; sequence GRFAEILGRG…AKELLQDPFL (259 aa). ATP contacts are provided by residues 99-102 and lysine 149; that span reads TELF. Aspartate 166 (proton acceptor) is an active-site residue. Positions 396 to 425 are disordered; sequence EDDETPHDHHRHRTDSFHSSSSHASSSQAS. Low complexity predominate over residues 412–425; sequence FHSSSSHASSSQAS. Phosphoserine is present on serine 522.

Belongs to the protein kinase superfamily. Ser/Thr protein kinase family. WNK subfamily.

The catalysed reaction is L-seryl-[protein] + ATP = O-phospho-L-seryl-[protein] + ADP + H(+). The enzyme catalyses L-threonyl-[protein] + ATP = O-phospho-L-threonyl-[protein] + ADP + H(+). In terms of biological role, may regulate flowering time by modulating the photoperiod pathway. This Arabidopsis thaliana (Mouse-ear cress) protein is Probable serine/threonine-protein kinase WNK4 (WNK4).